Here is a 300-residue protein sequence, read N- to C-terminus: MNQSYGRLVSRAAIAATAMASALLLIKIFAWWYTGSVSILAALVDSLVDIAASLTNLLVVRYSLQPADEEHTFGHGKAESLAALAQSMFISGSALFLFLTGIQHLVRPEPLQAAGVGVVVTLIALFSTLALVTFQRWVVRKTQSQAVRADMLHYQSDVMMNGAILVALGLSWYGWHRADALFALGIGIYILYSALRMGYEAVQSLLDRALPDEERQDIITIVTAWPGIRGAHDLRTRQSGPTRFIQIHLEMEDNLPLVQAHVIADQVEQAILRRFPGSDVIIHQDPSSVVPAAQQGFFER.

Residues 24-44 (LLIKIFAWWYTGSVSILAALV) form a helical membrane-spanning segment. Aspartate 45 and aspartate 49 together coordinate Zn(2+). The next 2 helical transmembrane spans lie at 82–102 (AALA…LTGI) and 114–134 (AGVG…LVTF). Zn(2+) contacts are provided by histidine 153 and aspartate 157. The next 2 helical transmembrane spans lie at 156–176 (SDVM…YGWH) and 178–198 (ADAL…LRMG).

Belongs to the cation diffusion facilitator (CDF) transporter (TC 2.A.4) family. FieF subfamily. As to quaternary structure, homodimer.

The protein resides in the cell inner membrane. It carries out the reaction Zn(2+)(in) + H(+)(out) = Zn(2+)(out) + H(+)(in). It catalyses the reaction Cd(2+)(in) + H(+)(out) = Cd(2+)(out) + H(+)(in). The enzyme catalyses Fe(2+)(in) + H(+)(out) = Fe(2+)(out) + H(+)(in). Divalent metal cation transporter which exports Zn(2+), Cd(2+) and possibly Fe(2+). May be involved in zinc and iron detoxification by efflux. The chain is Cation-efflux pump FieF from Klebsiella pneumoniae (strain 342).